The following is a 514-amino-acid chain: Membrane-bound lytic murein transglycosylase F (514 aa).

Residues 1-30 (MKKLKINYLFIGILTLLLAAALWPSIPWFG) form the signal peptide. The segment at 31–269 (KTENHIAAIQ…RIEEKYLGHG (239 aa)) is non-LT domain. Residues 270 to 514 (DDFDYVDTRS…LFTPQKKEEK (245 aa)) are LT domain. Residue glutamate 314 is part of the active site.

It in the N-terminal section; belongs to the bacterial solute-binding protein 3 family. The protein in the C-terminal section; belongs to the transglycosylase Slt family.

It localises to the cell outer membrane. It catalyses the reaction Exolytic cleavage of the (1-&gt;4)-beta-glycosidic linkage between N-acetylmuramic acid (MurNAc) and N-acetylglucosamine (GlcNAc) residues in peptidoglycan, from either the reducing or the non-reducing ends of the peptidoglycan chains, with concomitant formation of a 1,6-anhydrobond in the MurNAc residue.. In terms of biological role, murein-degrading enzyme that degrades murein glycan strands and insoluble, high-molecular weight murein sacculi, with the concomitant formation of a 1,6-anhydromuramoyl product. Lytic transglycosylases (LTs) play an integral role in the metabolism of the peptidoglycan (PG) sacculus. Their lytic action creates space within the PG sacculus to allow for its expansion as well as for the insertion of various structures such as secretion systems and flagella. The sequence is that of Membrane-bound lytic murein transglycosylase F from Salmonella paratyphi B (strain ATCC BAA-1250 / SPB7).